We begin with the raw amino-acid sequence, 362 residues long: MQSPTAQGTNDGVLPARTWPSVLGALTDGRDLAVDDAKWAMDEIMSDNATSAQIAAFGVALKMKGETPEELRGLADSMLGHARKVPVDDDVVDIVGTGGDRSNTVNISTMASLVVAASGIRVVKHGNRAASSKSGGADVLEALGVKINLGPDEVARCVREVGIGFCFAPVFHPALRFAGAPRKEIGIPTVFNVLGPLTNPARPRAGLIGCAFPGLISVVAGVLAQRGNSALVVRGDDGLDELTTSTTSTVHIVADGSVTTRGFDPRDIGIARVSLDELRGGNADVNAAVARRLLAGETGPVRDAVLLNAAAAIAAFRGLGGRTLEDGLSDGLATAAQSIDSGAAGALLGRWAELTSGLASSK.

Residues glycine 96, 99–100 (GD), threonine 104, 106–109 (NIST), 124–132 (KHGNRAASS), and glycine 136 each bind 5-phospho-alpha-D-ribose 1-diphosphate. Position 96 (glycine 96) interacts with anthranilate. Mg(2+) is bound at residue serine 108. Asparagine 127 is a binding site for anthranilate. Residue arginine 182 participates in anthranilate binding. Aspartate 240 and glutamate 241 together coordinate Mg(2+).

It belongs to the anthranilate phosphoribosyltransferase family. Homodimer. Mg(2+) is required as a cofactor.

It carries out the reaction N-(5-phospho-beta-D-ribosyl)anthranilate + diphosphate = 5-phospho-alpha-D-ribose 1-diphosphate + anthranilate. Its pathway is amino-acid biosynthesis; L-tryptophan biosynthesis; L-tryptophan from chorismate: step 2/5. Functionally, catalyzes the transfer of the phosphoribosyl group of 5-phosphorylribose-1-pyrophosphate (PRPP) to anthranilate to yield N-(5'-phosphoribosyl)-anthranilate (PRA). The polypeptide is Anthranilate phosphoribosyltransferase (Rhodococcus opacus (strain B4)).